A 157-amino-acid chain; its full sequence is Transcription antitermination protein NusB (157 aa).

This sequence belongs to the NusB family.

In terms of biological role, involved in transcription antitermination. Required for transcription of ribosomal RNA (rRNA) genes. Binds specifically to the boxA antiterminator sequence of the ribosomal RNA (rrn) operons. In Xylella fastidiosa (strain 9a5c), this protein is Transcription antitermination protein NusB.